A 197-amino-acid polypeptide reads, in one-letter code: Probable deoxycytidylate deaminase (197 aa).

Residues 49 to 183 enclose the CMP/dCMP-type deaminase domain; sequence KKHQRFLRIA…KMLDHARLPY (135 aa). A Zn(2+)-binding site is contributed by H117. The Proton donor role is filled by E119. 2 residues coordinate Zn(2+): C143 and C146.

This sequence belongs to the cytidine and deoxycytidylate deaminase family. It depends on Zn(2+) as a cofactor.

The enzyme catalyses dCMP + H2O + H(+) = dUMP + NH4(+). In terms of biological role, supplies the nucleotide substrate for thymidylate synthetase. The chain is Probable deoxycytidylate deaminase from Caenorhabditis elegans.